A 270-amino-acid polypeptide reads, in one-letter code: Thymidylate synthase (270 aa).

DUMP is bound by residues R28 and 133 to 134 (RR). The active-site Nucleophile is C153. DUMP is bound by residues 173–176 (RSAD), N184, and 214–216 (HIY). Residue D176 coordinates (6R)-5,10-methylene-5,6,7,8-tetrahydrofolate. A269 contacts (6R)-5,10-methylene-5,6,7,8-tetrahydrofolate.

It belongs to the thymidylate synthase family. Bacterial-type ThyA subfamily. As to quaternary structure, homodimer.

The protein resides in the cytoplasm. It catalyses the reaction dUMP + (6R)-5,10-methylene-5,6,7,8-tetrahydrofolate = 7,8-dihydrofolate + dTMP. Its pathway is pyrimidine metabolism; dTTP biosynthesis. Functionally, catalyzes the reductive methylation of 2'-deoxyuridine-5'-monophosphate (dUMP) to 2'-deoxythymidine-5'-monophosphate (dTMP) while utilizing 5,10-methylenetetrahydrofolate (mTHF) as the methyl donor and reductant in the reaction, yielding dihydrofolate (DHF) as a by-product. This enzymatic reaction provides an intracellular de novo source of dTMP, an essential precursor for DNA biosynthesis. The polypeptide is Thymidylate synthase (Corynebacterium diphtheriae (strain ATCC 700971 / NCTC 13129 / Biotype gravis)).